Here is a 164-residue protein sequence, read N- to C-terminus: MDAPRRDMELLSNSLAAYAHIRANPESFGLYFVLGVCFGLLLTLCLLVISISCAPRSRPRTPAPRRDPRSSTLEPEDEDDEEDEDTMTRLGPDDTLQGQELSTEPDGPLSVNVFTSAEELERAQRLEERERILREIWRTGQPDLLGSGTLGPGATATLGRMHYY.

Residues 29-49 traverse the membrane as a helical segment; that stretch reads GLYFVLGVCFGLLLTLCLLVI. The tract at residues 56 to 110 is disordered; it reads RSRPRTPAPRRDPRSSTLEPEDEDDEEDEDTMTRLGPDDTLQGQELSTEPDGPLS. A compositionally biased stretch (acidic residues) spans 74–85; that stretch reads EPEDEDDEEDED. A phosphothreonine mark is found at threonine 86, threonine 149, and threonine 157.

This sequence belongs to the EVA1 family.

The protein localises to the membrane. This is Protein eva-1 homolog B (Eva1b) from Mus musculus (Mouse).